We begin with the raw amino-acid sequence, 138 residues long: Acyl carrier protein 1, chloroplastic (138 aa).

The transit peptide at 1 to 56 (MASLSATTTVRVQPSSSSLHKLSQGNGRCSSIVCLDWGKSSFPTLRTSRRRSFISA) directs the protein to the chloroplast. One can recognise a Carrier domain in the interval 59–134 (KETIDKVCDI…QAADVIESLL (76 aa)). An O-(pantetheine 4'-phosphoryl)serine modification is found at S94.

This sequence belongs to the acyl carrier protein (ACP) family. 4'-phosphopantetheine is transferred from CoA to a specific serine of apo-ACP by acpS. This modification is essential for activity because fatty acids are bound in thioester linkage to the sulfhydryl of the prosthetic group.

Its subcellular location is the plastid. The protein localises to the chloroplast. It functions in the pathway lipid metabolism; fatty acid biosynthesis. Its function is as follows. Carrier of the growing fatty acid chain in fatty acid biosynthesis. The sequence is that of Acyl carrier protein 1, chloroplastic (ACL1.1) from Spinacia oleracea (Spinach).